Reading from the N-terminus, the 202-residue chain is Putative 3-methyladenine DNA glycosylase (202 aa).

The protein belongs to the DNA glycosylase MPG family.

The chain is Putative 3-methyladenine DNA glycosylase from Staphylococcus aureus (strain MRSA252).